A 236-amino-acid chain; its full sequence is Phosphoribosylaminoimidazole-succinocarboxamide synthase (236 aa).

It belongs to the SAICAR synthetase family.

It catalyses the reaction 5-amino-1-(5-phospho-D-ribosyl)imidazole-4-carboxylate + L-aspartate + ATP = (2S)-2-[5-amino-1-(5-phospho-beta-D-ribosyl)imidazole-4-carboxamido]succinate + ADP + phosphate + 2 H(+). It functions in the pathway purine metabolism; IMP biosynthesis via de novo pathway; 5-amino-1-(5-phospho-D-ribosyl)imidazole-4-carboxamide from 5-amino-1-(5-phospho-D-ribosyl)imidazole-4-carboxylate: step 1/2. The protein is Phosphoribosylaminoimidazole-succinocarboxamide synthase of Pseudomonas putida (strain W619).